Consider the following 291-residue polypeptide: Pyridoxal 5'-phosphate synthase subunit PdxS (291 aa).

Asp-23 contacts D-ribose 5-phosphate. Lys-80 serves as the catalytic Schiff-base intermediate with D-ribose 5-phosphate. Gly-152 contributes to the D-ribose 5-phosphate binding site. Arg-164 contacts D-glyceraldehyde 3-phosphate. Residues Gly-213 and 234 to 235 (GS) each bind D-ribose 5-phosphate.

It belongs to the PdxS/SNZ family. In the presence of PdxT, forms a dodecamer of heterodimers.

The enzyme catalyses aldehydo-D-ribose 5-phosphate + D-glyceraldehyde 3-phosphate + L-glutamine = pyridoxal 5'-phosphate + L-glutamate + phosphate + 3 H2O + H(+). It functions in the pathway cofactor biosynthesis; pyridoxal 5'-phosphate biosynthesis. In terms of biological role, catalyzes the formation of pyridoxal 5'-phosphate from ribose 5-phosphate (RBP), glyceraldehyde 3-phosphate (G3P) and ammonia. The ammonia is provided by the PdxT subunit. Can also use ribulose 5-phosphate and dihydroxyacetone phosphate as substrates, resulting from enzyme-catalyzed isomerization of RBP and G3P, respectively. The chain is Pyridoxal 5'-phosphate synthase subunit PdxS from Clostridium acetobutylicum (strain ATCC 824 / DSM 792 / JCM 1419 / IAM 19013 / LMG 5710 / NBRC 13948 / NRRL B-527 / VKM B-1787 / 2291 / W).